Reading from the N-terminus, the 675-residue chain is tRNA 5-methylaminomethyl-2-thiouridine biosynthesis bifunctional protein MnmC (675 aa).

The interval 1-245 (MANLPIQHAS…KREMLSGLLP (245 aa)) is tRNA (mnm(5)s(2)U34)-methyltransferase. The interval 271 to 675 (IGGGIASVLT…LLKGKPVTHD (405 aa)) is FAD-dependent cmnm(5)s(2)U34 oxidoreductase.

It in the N-terminal section; belongs to the methyltransferase superfamily. tRNA (mnm(5)s(2)U34)-methyltransferase family. This sequence in the C-terminal section; belongs to the DAO family. The cofactor is FAD.

It localises to the cytoplasm. It carries out the reaction 5-aminomethyl-2-thiouridine(34) in tRNA + S-adenosyl-L-methionine = 5-methylaminomethyl-2-thiouridine(34) in tRNA + S-adenosyl-L-homocysteine + H(+). Catalyzes the last two steps in the biosynthesis of 5-methylaminomethyl-2-thiouridine (mnm(5)s(2)U) at the wobble position (U34) in tRNA. Catalyzes the FAD-dependent demodification of cmnm(5)s(2)U34 to nm(5)s(2)U34, followed by the transfer of a methyl group from S-adenosyl-L-methionine to nm(5)s(2)U34, to form mnm(5)s(2)U34. The chain is tRNA 5-methylaminomethyl-2-thiouridine biosynthesis bifunctional protein MnmC from Pectobacterium atrosepticum (strain SCRI 1043 / ATCC BAA-672) (Erwinia carotovora subsp. atroseptica).